We begin with the raw amino-acid sequence, 161 residues long: Ribonuclease P protein component (161 aa).

Belongs to the RnpA family. As to quaternary structure, consists of a catalytic RNA component (M1 or rnpB) and a protein subunit.

The enzyme catalyses Endonucleolytic cleavage of RNA, removing 5'-extranucleotides from tRNA precursor.. In terms of biological role, RNaseP catalyzes the removal of the 5'-leader sequence from pre-tRNA to produce the mature 5'-terminus. It can also cleave other RNA substrates such as 4.5S RNA. The protein component plays an auxiliary but essential role in vivo by binding to the 5'-leader sequence and broadening the substrate specificity of the ribozyme. The chain is Ribonuclease P protein component from Helicobacter pylori (strain J99 / ATCC 700824) (Campylobacter pylori J99).